The primary structure comprises 348 residues: Protein RecA (348 aa).

71 to 78 (GVESSGKT) provides a ligand contact to ATP.

This sequence belongs to the RecA family.

It localises to the cytoplasm. Functionally, can catalyze the hydrolysis of ATP in the presence of single-stranded DNA, the ATP-dependent uptake of single-stranded DNA by duplex DNA, and the ATP-dependent hybridization of homologous single-stranded DNAs. It interacts with LexA causing its activation and leading to its autocatalytic cleavage. The protein is Protein RecA of Aquifex pyrophilus.